The sequence spans 567 residues: Dihydroxy-acid dehydratase (567 aa).

C52 serves as a coordination point for [2Fe-2S] cluster. D84 lines the Mg(2+) pocket. C125 serves as a coordination point for [2Fe-2S] cluster. D126 and K127 together coordinate Mg(2+). Position 127 is an N6-carboxylysine (K127). A [2Fe-2S] cluster-binding site is contributed by C197. E448 lines the Mg(2+) pocket. S474 serves as the catalytic Proton acceptor.

It belongs to the IlvD/Edd family. As to quaternary structure, homodimer. [2Fe-2S] cluster is required as a cofactor. Mg(2+) serves as cofactor.

The enzyme catalyses (2R)-2,3-dihydroxy-3-methylbutanoate = 3-methyl-2-oxobutanoate + H2O. The catalysed reaction is (2R,3R)-2,3-dihydroxy-3-methylpentanoate = (S)-3-methyl-2-oxopentanoate + H2O. Its pathway is amino-acid biosynthesis; L-isoleucine biosynthesis; L-isoleucine from 2-oxobutanoate: step 3/4. It functions in the pathway amino-acid biosynthesis; L-valine biosynthesis; L-valine from pyruvate: step 3/4. Its function is as follows. Functions in the biosynthesis of branched-chain amino acids. Catalyzes the dehydration of (2R,3R)-2,3-dihydroxy-3-methylpentanoate (2,3-dihydroxy-3-methylvalerate) into 2-oxo-3-methylpentanoate (2-oxo-3-methylvalerate) and of (2R)-2,3-dihydroxy-3-methylbutanoate (2,3-dihydroxyisovalerate) into 2-oxo-3-methylbutanoate (2-oxoisovalerate), the penultimate precursor to L-isoleucine and L-valine, respectively. The protein is Dihydroxy-acid dehydratase of Streptococcus pneumoniae serotype 2 (strain D39 / NCTC 7466).